The primary structure comprises 179 residues: Adenine phosphoribosyltransferase (179 aa).

Belongs to the purine/pyrimidine phosphoribosyltransferase family. As to quaternary structure, homodimer.

It localises to the cytoplasm. It carries out the reaction AMP + diphosphate = 5-phospho-alpha-D-ribose 1-diphosphate + adenine. It participates in purine metabolism; AMP biosynthesis via salvage pathway; AMP from adenine: step 1/1. In terms of biological role, catalyzes a salvage reaction resulting in the formation of AMP, that is energically less costly than de novo synthesis. The chain is Adenine phosphoribosyltransferase from Histophilus somni (strain 129Pt) (Haemophilus somnus).